The chain runs to 186 residues: GTP cyclohydrolase 1 2 (186 aa).

This sequence belongs to the GTP cyclohydrolase I family. In terms of assembly, homomer.

It carries out the reaction GTP + H2O = 7,8-dihydroneopterin 3'-triphosphate + formate + H(+). Its pathway is cofactor biosynthesis; 7,8-dihydroneopterin triphosphate biosynthesis; 7,8-dihydroneopterin triphosphate from GTP: step 1/1. The protein is GTP cyclohydrolase 1 2 of Pseudomonas putida (strain ATCC 47054 / DSM 6125 / CFBP 8728 / NCIMB 11950 / KT2440).